A 283-amino-acid chain; its full sequence is GTPase Era (283 aa).

An Era-type G domain is found at 7 to 175; it reads YCGHVIIVGK…KNIIKSYLPE (169 aa). The tract at residues 15 to 22 is G1; the sequence is GKANVGKS. 15-22 provides a ligand contact to GTP; it reads GKANVGKS. The G2 stretch occupies residues 41–45; it reads NTTQS. The interval 62-65 is G3; the sequence is DTPG. GTP is bound by residues 62-66 and 124-127; these read DTPGV and NKID. The tract at residues 124 to 127 is G4; sequence NKID. The segment at 154–156 is G5; that stretch reads ISA. Residues 198-283 form the KH type-2 domain; it reads IREQLILFLG…HLVLWVKDKN (86 aa).

It belongs to the TRAFAC class TrmE-Era-EngA-EngB-Septin-like GTPase superfamily. Era GTPase family. Monomer.

Its subcellular location is the cytoplasm. It is found in the cell membrane. An essential GTPase that binds both GDP and GTP, with rapid nucleotide exchange. Plays a role in 16S rRNA processing and 30S ribosomal subunit biogenesis and possibly also in cell cycle regulation and energy metabolism. This Buchnera aphidicola subsp. Acyrthosiphon pisum (strain APS) (Acyrthosiphon pisum symbiotic bacterium) protein is GTPase Era.